The chain runs to 157 residues: Galactose-specific lectin (157 aa).

A Jacalin-type lectin domain is found at 12–157; it reads SIVVGTWGAE…LDYIGFHLAL (146 aa). Residue asparagine 45 is glycosylated (N-linked (GlcNAc...) asparagine).

Belongs to the jacalin lectin family. As to quaternary structure, tetramer of heterodimers of light and heavy chains which are non-covalently linked. Post-translationally, N-linked carbohydrates at Asn-45 can be of complex or paucimannose type.

Its function is as follows. Alpha-D-galactose-specific lectin. Has hemagglutinating activity towards human and rabbit erythrocytes. Is highly cytotoxic to human cells in vitro. This Morus indica (Mulberry) protein is Galactose-specific lectin.